The chain runs to 431 residues: Serine hydroxymethyltransferase (431 aa).

Ala121–Val123 is a binding site for (6S)-5,6,7,8-tetrahydrofolate. The residue at position 227 (Lys227) is an N6-(pyridoxal phosphate)lysine.

It belongs to the SHMT family. Homodimer. It depends on pyridoxal 5'-phosphate as a cofactor.

It localises to the cytoplasm. It functions in the pathway amino-acid biosynthesis; glycine biosynthesis; glycine from L-serine: step 1/1. Its function is as follows. Catalyzes the reversible interconversion of serine and glycine with a modified folate serving as the one-carbon carrier. Also exhibits a pteridine-independent aldolase activity toward beta-hydroxyamino acids, producing glycine and aldehydes, via a retro-aldol mechanism. The protein is Serine hydroxymethyltransferase of Metallosphaera sedula (strain ATCC 51363 / DSM 5348 / JCM 9185 / NBRC 15509 / TH2).